The chain runs to 272 residues: L-aminoadipate-semialdehyde dehydrogenase-phosphopantetheinyl transferase (272 aa).

Belongs to the P-Pant transferase superfamily. AcpS family.

The enzyme catalyses apo-[ACP] + CoA = holo-[ACP] + adenosine 3',5'-bisphosphate + H(+). In terms of biological role, catalyzes the transfer of a 4'-phosphopantetheine moiety from coenzyme A to a serine residue of acceptor proteins, such as alpha-aminoadipate reductase. Necessary for alpha-aminoadipate reductase activity. This Saccharomyces cerevisiae (strain ATCC 204508 / S288c) (Baker's yeast) protein is L-aminoadipate-semialdehyde dehydrogenase-phosphopantetheinyl transferase.